Reading from the N-terminus, the 365-residue chain is Bifunctional chorismate mutase/prephenate dehydratase (365 aa).

In terms of domain architecture, Chorismate mutase spans 1–96; sequence MADQDQLKAL…SCLALEQPLK (96 aa). Substrate-binding residues include Arg11, Arg28, Lys39, and Glu57. The region spanning 97 to 272 is the Prephenate dehydratase domain; that stretch reads VAYLGPEGTF…NSTRFLIIGN (176 aa). Residues 284 to 361 enclose the ACT domain; it reads SIIVSMRNKP…VALKVLGSYP (78 aa).

The protein resides in the cytoplasm. The enzyme catalyses chorismate = prephenate. It carries out the reaction prephenate + H(+) = 3-phenylpyruvate + CO2 + H2O. Its pathway is amino-acid biosynthesis; L-phenylalanine biosynthesis; phenylpyruvate from prephenate: step 1/1. It participates in metabolic intermediate biosynthesis; prephenate biosynthesis; prephenate from chorismate: step 1/1. In terms of biological role, catalyzes the Claisen rearrangement of chorismate to prephenate and the decarboxylation/dehydration of prephenate to phenylpyruvate. The sequence is that of Bifunctional chorismate mutase/prephenate dehydratase (pheA) from Pseudomonas aeruginosa (strain ATCC 15692 / DSM 22644 / CIP 104116 / JCM 14847 / LMG 12228 / 1C / PRS 101 / PAO1).